The chain runs to 100 residues: Biogenesis of lysosome-related organelles complex 1 subunit CNL1 (100 aa).

A coiled-coil region spans residues 25 to 46 (SDRVKSLELEATRLVQRQNELV).

This sequence belongs to the BLOC1S4 family. In terms of assembly, component of the biogenesis of lysosome-related organelles complex-1 (BLOC-1).

It localises to the cytoplasm. In terms of biological role, component of the biogenesis of lysosome-related organelles complex-1 (BLOC-1), a complex that is involved in endosomal cargo sorting. The chain is Biogenesis of lysosome-related organelles complex 1 subunit CNL1 (CLN1) from Candida glabrata (strain ATCC 2001 / BCRC 20586 / JCM 3761 / NBRC 0622 / NRRL Y-65 / CBS 138) (Yeast).